The chain runs to 298 residues: Cyclin-dependent kinase 2 homolog (298 aa).

Positions 4–284 (YHKMEKIGEG…AKEALKHDYF (281 aa)) constitute a Protein kinase domain. Residues 10–18 (IGEGTYGVV) and K32 each bind ATP. T14 bears the Phosphothreonine mark. Y15 is modified (phosphotyrosine). D125 serves as the catalytic Proton acceptor. Phosphothreonine is present on T158.

It belongs to the protein kinase superfamily. CMGC Ser/Thr protein kinase family. CDC2/CDKX subfamily. As to quaternary structure, may form a complex composed of at least the catalytic subunit CRK2 and a cyclin. Mg(2+) is required as a cofactor.

The protein resides in the cytoplasm. The enzyme catalyses L-seryl-[protein] + ATP = O-phospho-L-seryl-[protein] + ADP + H(+). The catalysed reaction is L-threonyl-[protein] + ATP = O-phospho-L-threonyl-[protein] + ADP + H(+). It catalyses the reaction [DNA-directed RNA polymerase] + ATP = phospho-[DNA-directed RNA polymerase] + ADP + H(+). Its activity is regulated as follows. Phosphorylation at Thr-14 or Tyr-15 inactivates the enzyme, while phosphorylation at Thr-158 activates it. Serine/threonine-protein kinase. Involved in the control of the cell cycle. Required for entry into S-phase and mitosis. Probable component of the kinase complex that phosphorylates the repetitive C-terminus of RNA polymerase II. The polypeptide is Cyclin-dependent kinase 2 homolog (Theileria parva (East coast fever infection agent)).